The primary structure comprises 302 residues: Recombination-associated protein RdgC (302 aa).

This sequence belongs to the RdgC family.

It localises to the cytoplasm. Its subcellular location is the nucleoid. Functionally, may be involved in recombination. The chain is Recombination-associated protein RdgC from Actinobacillus succinogenes (strain ATCC 55618 / DSM 22257 / CCUG 43843 / 130Z).